The following is a 227-amino-acid chain: Protein M1425_1941 (227 aa).

The AMMECR1 domain maps to 15 to 209 (EIGRFLIEIA…ETRPDGSDII (195 aa)).

The polypeptide is Protein M1425_1941 (Saccharolobus islandicus (strain M.14.25 / Kamchatka #1) (Sulfolobus islandicus)).